Here is a 183-residue protein sequence, read N- to C-terminus: tRNA-splicing endonuclease (183 aa).

Active-site residues include Y120, H128, and K159.

It belongs to the tRNA-intron endonuclease family. Archaeal short subfamily. In terms of assembly, homotetramer; although the tetramer contains four active sites, only two participate in the cleavage. Therefore, it should be considered as a dimer of dimers.

It carries out the reaction pretRNA = a 3'-half-tRNA molecule with a 5'-OH end + a 5'-half-tRNA molecule with a 2',3'-cyclic phosphate end + an intron with a 2',3'-cyclic phosphate and a 5'-hydroxyl terminus.. Endonuclease that removes tRNA introns. Cleaves pre-tRNA at the 5'- and 3'-splice sites to release the intron. The products are an intron and two tRNA half-molecules bearing 2',3' cyclic phosphate and 5'-OH termini. Recognizes a pseudosymmetric substrate in which 2 bulged loops of 3 bases are separated by a stem of 4 bp. This Pyrobaculum arsenaticum (strain DSM 13514 / JCM 11321 / PZ6) protein is tRNA-splicing endonuclease.